Consider the following 370-residue polypeptide: 3-dehydroquinate synthase (370 aa).

NAD(+) is bound by residues 108-112 (GVIGD), 132-133 (TT), K145, and K154. 3 residues coordinate Zn(2+): E187, H249, and H267.

Belongs to the sugar phosphate cyclases superfamily. Dehydroquinate synthase family. It depends on Co(2+) as a cofactor. Zn(2+) serves as cofactor. NAD(+) is required as a cofactor.

Its subcellular location is the cytoplasm. The catalysed reaction is 7-phospho-2-dehydro-3-deoxy-D-arabino-heptonate = 3-dehydroquinate + phosphate. It functions in the pathway metabolic intermediate biosynthesis; chorismate biosynthesis; chorismate from D-erythrose 4-phosphate and phosphoenolpyruvate: step 2/7. Functionally, catalyzes the conversion of 3-deoxy-D-arabino-heptulosonate 7-phosphate (DAHP) to dehydroquinate (DHQ). This Cereibacter sphaeroides (strain KD131 / KCTC 12085) (Rhodobacter sphaeroides) protein is 3-dehydroquinate synthase.